The primary structure comprises 736 residues: MYFSSFLALGALVQAAAATYFAPNSTGLRIQHGFETILIQPFGYDGFRVRAWPFRPPSGNEISFIYDPPIEGYEDTAHGMSYDTATTGTEPRTLRNGNIILRTTGWGGTTAGYRLSFYRVNDDGSETLLTNEYAPLKSLNPRYYYWPGPGAEFSAEFSFSATPDEQIYGTGTQQDHMINKKGSVIDMVNFNSYIPTPVFMSNKGYAFIWNMPAEGRMEFGTLRTRFTAASTTLVDYVIVAAQPGDYDTLQQRISALTGRAPAPPDFSLGYIQSKLRYENQTEVELLAQNFHDRNIPVSMIVIDYQSWAHQGDWALDPRLWPNVAQMSARVKNLTGAEMMASLWPSVADDSVNYAALQANGLLSATRDGPGTTDSWNGSYIRNYDSTNPSARKFLWSMLKKNYYDKGIKNFWIDQADGGALGEAYENNGQSTYIESIPFTLPNVNYAAGTQLSVGKLYPWAHQQAIEEGFRNATDTKEGSACDHVSLSRSGYIGSQRFCSMIWSGDTTSVWDTLAVQVASGLSAAATGWGWWTVDAGGFEVDSTVWWSGNIDTPEYRELYVRWLAWTTFLPFMRTHGSRTCYFQDAYTCANEPWSYGASNTPIIVSYIHLRYQLGAYLKSIFNQFHLTGRSIMRPLYMDFEKTDPKISQLVSSNSNYTTQQYMFGPRLLVSPVTLPNVTEWPVYLPQTGQNNTKPWTYWWTNETYAGGQVVKVPAPLQHIPVFHLGSREELLSGNVF.

Residues 1–18 form the signal peptide; it reads MYFSSFLALGALVQAAAA. N-linked (GlcNAc...) asparagine glycans are attached at residues asparagine 24, asparagine 279, asparagine 332, and asparagine 376. Residue aspartate 413 is part of the active site. The N-linked (GlcNAc...) asparagine glycan is linked to asparagine 471. Aspartate 505 (proton donor) is an active-site residue. N-linked (GlcNAc...) asparagine glycans are attached at residues asparagine 655, asparagine 676, asparagine 690, and asparagine 701.

It belongs to the glycosyl hydrolase 31 family.

It localises to the secreted. The catalysed reaction is Hydrolysis of terminal, non-reducing alpha-D-xylose residues with release of alpha-D-xylose.. Catalyzes the liberation of alpha-xylose from the non-reducing terminal glucose of xyloglucan oligosaccharides. The polypeptide is Alpha-xylosidase A (Aspergillus niger (strain ATCC MYA-4892 / CBS 513.88 / FGSC A1513)).